The following is a 114-amino-acid chain: Cytochrome b-c1 complex subunit 1, mitochondrial (114 aa).

An N6-acetyllysine modification is found at Lys-31.

It belongs to the peptidase M16 family. UQCRC1/QCR1 subfamily. As to quaternary structure, component of the ubiquinol-cytochrome c oxidoreductase (cytochrome b-c1 complex, complex III, CIII), a multisubunit enzyme composed of 11 subunits. The complex is composed of 3 respiratory subunits cytochrome b, cytochrome c1 and Rieske protein UQCRFS1, 2 core protein subunits UQCRC1/QCR1 and UQCRC2/QCR2, and 6 low-molecular weight protein subunits UQCRH/QCR6, UQCRB/QCR7, UQCRQ/QCR8, UQCR10/QCR9, UQCR11/QCR10 and subunit 9, the cleavage product of Rieske protein UQCRFS1. The complex exists as an obligatory dimer and forms supercomplexes (SCs) in the inner mitochondrial membrane with NADH-ubiquinone oxidoreductase (complex I, CI) and cytochrome c oxidase (complex IV, CIV), resulting in different assemblies (supercomplex SCI(1)III(2)IV(1) and megacomplex MCI(2)III(2)IV(2)). Interacts with UQCC6. Interacts with STMP1.

It is found in the mitochondrion inner membrane. Its function is as follows. Component of the ubiquinol-cytochrome c oxidoreductase, a multisubunit transmembrane complex that is part of the mitochondrial electron transport chain which drives oxidative phosphorylation. The respiratory chain contains 3 multisubunit complexes succinate dehydrogenase (complex II, CII), ubiquinol-cytochrome c oxidoreductase (cytochrome b-c1 complex, complex III, CIII) and cytochrome c oxidase (complex IV, CIV), that cooperate to transfer electrons derived from NADH and succinate to molecular oxygen, creating an electrochemical gradient over the inner membrane that drives transmembrane transport and the ATP synthase. The cytochrome b-c1 complex catalyzes electron transfer from ubiquinol to cytochrome c, linking this redox reaction to translocation of protons across the mitochondrial inner membrane, with protons being carried across the membrane as hydrogens on the quinol. In the process called Q cycle, 2 protons are consumed from the matrix, 4 protons are released into the intermembrane space and 2 electrons are passed to cytochrome c. The 2 core subunits UQCRC1/QCR1 and UQCRC2/QCR2 are homologous to the 2 mitochondrial-processing peptidase (MPP) subunits beta-MPP and alpha-MPP respectively, and they seem to have preserved their MPP processing properties. May be involved in the in situ processing of UQCRFS1 into the mature Rieske protein and its mitochondrial targeting sequence (MTS)/subunit 9 when incorporated into complex III. Seems to play an important role in the maintenance of proper mitochondrial function in nigral dopaminergic neurons. This Mesocricetus auratus (Golden hamster) protein is Cytochrome b-c1 complex subunit 1, mitochondrial.